A 458-amino-acid polypeptide reads, in one-letter code: Bifunctional protein GlmU (458 aa).

The interval 1-229 (MNKFAIVLAA…FDESLGVNDR (229 aa)) is pyrophosphorylase. UDP-N-acetyl-alpha-D-glucosamine is bound by residues 8-11 (LAAG), K22, Q72, and 77-78 (GT). D102 is a binding site for Mg(2+). Residues G139, E154, N169, and N227 each coordinate UDP-N-acetyl-alpha-D-glucosamine. Mg(2+) is bound at residue N227. The tract at residues 230 to 250 (VALSQAELTMRKRINHQHMVN) is linker. Positions 251–458 (GVTLIDPATT…AKKMPHYRGQ (208 aa)) are N-acetyltransferase. The UDP-N-acetyl-alpha-D-glucosamine site is built by R332 and K350. H362 functions as the Proton acceptor in the catalytic mechanism. UDP-N-acetyl-alpha-D-glucosamine-binding residues include Y365 and N376. 4 residues coordinate acetyl-CoA: A379, S404, A422, and R439.

It in the N-terminal section; belongs to the N-acetylglucosamine-1-phosphate uridyltransferase family. This sequence in the C-terminal section; belongs to the transferase hexapeptide repeat family. As to quaternary structure, homotrimer. It depends on Mg(2+) as a cofactor.

It is found in the cytoplasm. The catalysed reaction is alpha-D-glucosamine 1-phosphate + acetyl-CoA = N-acetyl-alpha-D-glucosamine 1-phosphate + CoA + H(+). It catalyses the reaction N-acetyl-alpha-D-glucosamine 1-phosphate + UTP + H(+) = UDP-N-acetyl-alpha-D-glucosamine + diphosphate. Its pathway is nucleotide-sugar biosynthesis; UDP-N-acetyl-alpha-D-glucosamine biosynthesis; N-acetyl-alpha-D-glucosamine 1-phosphate from alpha-D-glucosamine 6-phosphate (route II): step 2/2. The protein operates within nucleotide-sugar biosynthesis; UDP-N-acetyl-alpha-D-glucosamine biosynthesis; UDP-N-acetyl-alpha-D-glucosamine from N-acetyl-alpha-D-glucosamine 1-phosphate: step 1/1. It participates in bacterial outer membrane biogenesis; LPS lipid A biosynthesis. In terms of biological role, catalyzes the last two sequential reactions in the de novo biosynthetic pathway for UDP-N-acetylglucosamine (UDP-GlcNAc). The C-terminal domain catalyzes the transfer of acetyl group from acetyl coenzyme A to glucosamine-1-phosphate (GlcN-1-P) to produce N-acetylglucosamine-1-phosphate (GlcNAc-1-P), which is converted into UDP-GlcNAc by the transfer of uridine 5-monophosphate (from uridine 5-triphosphate), a reaction catalyzed by the N-terminal domain. This chain is Bifunctional protein GlmU, found in Lactococcus lactis subsp. lactis (strain IL1403) (Streptococcus lactis).